Consider the following 451-residue polypeptide: REST corepressor 3 (451 aa).

Positions 1–55 are disordered; sequence MPGMMEKGPELLGKSRSANGGAKSPAGGGGSSANGGLHFSEPESGCSSDDEHGDV. The ELM2 domain maps to 55–139; it reads VGMRVGAEYQ…KSLADLPNFT (85 aa). Lys-76 is covalently cross-linked (Glycyl lysine isopeptide (Lys-Gly) (interchain with G-Cter in SUMO2)). An SANT domain is found at 140–191; sequence PFPDEWTVEDKVLFEQAFSFHGKSFHRIQQMLPDKTIASLVKYYYSWKKTRS. Positions 204–275 are disordered; it reads ANRHNQGDSD…SQRSKCRPPK (72 aa). A phosphoserine mark is found at Ser-212 and Ser-227. Over residues 218-240 the composition is skewed to basic and acidic residues; that stretch reads EAHPMDGNDSDYDPKKEAKREGN. Lys-249 is covalently cross-linked (Glycyl lysine isopeptide (Lys-Gly) (interchain with G-Cter in SUMO2)). Residues 261–273 are compositionally biased toward basic residues; that stretch reads QHRHHSQRSKCRP. Residues 293–329 adopt a coiled-coil conformation; the sequence is AANTILRQLDMELISLKRQVQNAKQVNSALKQKMEGG. The segment at 333–451 is disordered; the sequence is FKPPEAQTPQ…IQTDSQPSLH (119 aa). A compositionally biased stretch (pro residues) spans 349 to 361; that stretch reads PSPPAPSSTPTPT. A compositionally biased stretch (low complexity) spans 375 to 384; it reads RPTLPAAPAL. Arg-401 and Arg-413 each carry asymmetric dimethylarginine. The segment covering 431–451 has biased composition (polar residues); it reads VGGQQPPSLIGIQTDSQPSLH.

This sequence belongs to the CoREST family.

It is found in the nucleus. In terms of biological role, may act as a component of a corepressor complex that represses transcription. The polypeptide is REST corepressor 3 (Rcor3) (Mus musculus (Mouse)).